The sequence spans 254 residues: Type II restriction enzyme HpaI (254 aa).

It carries out the reaction Endonucleolytic cleavage of DNA to give specific double-stranded fragments with terminal 5'-phosphates.. In terms of biological role, a P subtype restriction enzyme that recognizes the double-stranded sequence 5'-GTTAAC-3' and cleaves after T-3. This is Type II restriction enzyme HpaI (hpaIR) from Haemophilus parainfluenzae.